The following is a 121-amino-acid chain: Acidic phospholipase A2 PLA-2 (121 aa).

Intrachain disulfides connect C26–C115, C28–C44, C43–C95, C49–C121, C50–C88, C57–C81, and C75–C86. 3 residues coordinate Ca(2+): Y27, G29, and G31. Residue H47 is part of the active site. Residue D48 coordinates Ca(2+). The active site involves D89.

This sequence belongs to the phospholipase A2 family. Group II subfamily. D49 sub-subfamily. The cofactor is Ca(2+). In terms of tissue distribution, expressed by the venom gland.

It localises to the secreted. It catalyses the reaction a 1,2-diacyl-sn-glycero-3-phosphocholine + H2O = a 1-acyl-sn-glycero-3-phosphocholine + a fatty acid + H(+). Its function is as follows. PLA2 catalyzes the calcium-dependent hydrolysis of the 2-acyl groups in 3-sn-phosphoglycerides. This Eristicophis macmahoni (Leaf-nosed viper) protein is Acidic phospholipase A2 PLA-2.